Here is a 178-residue protein sequence, read N- to C-terminus: UPF0098 protein PYRAB11530 (178 aa).

The first 22 residues, 1–22 (MRYLVPLLVFMVLGMGCLGGGG), serve as a signal peptide directing secretion.

This sequence belongs to the UPF0098 family.

This is UPF0098 protein PYRAB11530 from Pyrococcus abyssi (strain GE5 / Orsay).